We begin with the raw amino-acid sequence, 407 residues long: Pleckstrin homology-like domain family A member 1 (407 aa).

Basic and acidic residues-rich tracts occupy residues 1 to 11 and 54 to 63; these read MRRTPAAERLS and RSAEDGREQP. The interval 1–67 is disordered; sequence MRRTPAAERL…DGREQPAHGS (67 aa). The 36-residue stretch at 149–184 folds into the PH domain; sequence SGCKALKEGVLEKRSDGLLQLWKKKCCILTEEGLLL. Disordered regions lie at residues 188–224 and 296–407; these read KQVQ…EPPA and QQHL…SNSA. 2 stretches are compositionally biased toward low complexity: residues 189-204 and 297-319; these read QVQH…QPGQ and QHLV…QPQI. Residues 312–348 are 15 X 2 AA repeats of P-Q; that stretch reads PQPQQPQIQPQPQPQIQPQPQPQPQPQPQPQQQPQPQ. Positions 320–344 are enriched in pro residues; it reads QPQPQPQIQPQPQPQPQPQPQPQQQ. The 11 X 2 AA repeats of P-H stretch occupies residues 354 to 381; the sequence is PHPHPHLYPHPHPHAHSHPHPHPHPHPH. A compositionally biased stretch (basic residues) spans 354–384; that stretch reads PHPHPHLYPHPHPHAHSHPHPHPHPHPHQLQ. The span at 385–395 shows a compositional bias: low complexity; that stretch reads HAHQPLHSQPQ.

As to quaternary structure, interacts with RPL14, EIF3S7 and PABPC4.

It localises to the cytoplasm. The protein resides in the cytoplasmic vesicle. The protein localises to the nucleus. Its subcellular location is the nucleolus. Its function is as follows. Seems to be involved in regulation of apoptosis. May be involved in detachment-mediated programmed cell death. May mediate apoptosis during neuronal development. May be involved in regulation of anti-apoptotic effects of IGF1. May be involved in translational regulation. The polypeptide is Pleckstrin homology-like domain family A member 1 (Phlda1) (Rattus norvegicus (Rat)).